The primary structure comprises 285 residues: Nurim (285 aa).

The Nuclear portion of the chain corresponds to 1 to 16 (MSANVQVSGQLSSGPS). A helical membrane pass occupies residues 17 to 44 (LPACIVLSAVSLLCFVAGFGTGAEFVRF). The Perinuclear space segment spans residues 45-74 (LSFGAIFRNISGGLDGEIPLTWSEAIRNTQ). The helical transmembrane segment at 75-96 (FQCCIGIDIGLLFLFVLQHSLM) threads the bilayer. The Nuclear portion of the chain corresponds to 97 to 113 (AWTAVKKNVLHVFGVLQ). Residues 114–130 (RSIYILCTALSLQVLMR) form a helical membrane-spanning segment. The Perinuclear space portion of the chain corresponds to 131 to 149 (FWQPCPHGPYLWNVSSDPW). A helical membrane pass occupies residues 150–180 (SAWLPLLCALVHTISWLLIFSVLLIFDYAEL). Topologically, residues 181–207 (MGIKQVYYFCLGMGDPLSHKSPRVARL) are nuclear. The chain crosses the membrane as a helical span at residues 208 to 226 (YAHLRHPIYLELLLILWAV). At 227-232 (PCLPPD) the chain is on the perinuclear space side. Residues 233-250 (RLILAIFFTLYLSLVHRL) traverse the membrane as a helical segment. The Nuclear segment spans residues 251-285 (DVQDYAYLRSQLEKKFLLFSREEASAVGGQIRKNN).

This sequence belongs to the nurim family.

The protein resides in the nucleus inner membrane. The protein is Nurim (nrm) of Xenopus laevis (African clawed frog).